Consider the following 275-residue polypeptide: Small ribosomal subunit protein uS2 (275 aa).

The tract at residues 232–256 (ARATDGKPEPEPVPGQELGADEPLA) is disordered.

This sequence belongs to the universal ribosomal protein uS2 family.

The chain is Small ribosomal subunit protein uS2 from Acidothermus cellulolyticus (strain ATCC 43068 / DSM 8971 / 11B).